A 113-amino-acid chain; its full sequence is UPF0482 protein KPN78578_15540 (113 aa).

The signal sequence occupies residues 1-28 (MNMTLNKRWCLTAILALSAVVYTSSSYA). The tract at residues 38–60 (GDSAQSRQQASMEKEQWNDTRSL) is disordered. Residues 39–48 (DSAQSRQQAS) show a composition bias toward polar residues. Residues 49–59 (MEKEQWNDTRS) are compositionally biased toward basic and acidic residues.

Belongs to the UPF0482 family.

This is UPF0482 protein KPN78578_15540 from Klebsiella pneumoniae subsp. pneumoniae (strain ATCC 700721 / MGH 78578).